We begin with the raw amino-acid sequence, 307 residues long: Taste receptor type 2 member 41 (307 aa).

Over 1–7 the chain is Extracellular; that stretch reads MQAALTA. The helical transmembrane segment at 8–28 threads the bilayer; that stretch reads FFMLFFSLLSLLGIAANGFIV. Residues 29–40 lie on the Cytoplasmic side of the membrane; sequence LVLGREWLQYGR. Residues 41–61 traverse the membrane as a helical segment; that stretch reads LLPLDMILISLGVSRFCLQLV. Topologically, residues 62–88 are extracellular; that stretch reads GTVYNFYYSAHKVEYSGGLSRQFFHLH. The helical transmembrane segment at 89–109 threads the bilayer; that stretch reads WHFLNLATFXFCSWLSVLFCV. Residues 110-129 are Cytoplasmic-facing; that stretch reads KXANITHPTFLWLKWRFPGW. Residues 130–150 form a helical membrane-spanning segment; sequence VPWLLLGSVLISFIITLLLFW. Topologically, residues 151-183 are extracellular; the sequence is VNYPVYQEFLIRKFSGNMTYEWNTRIEMYYLPS. N-linked (GlcNAc...) asparagine glycosylation is present at Asn167. A helical membrane pass occupies residues 184–204; the sequence is LKLVIWSIPCSVFLVSIMLLI. Over 205–234 the chain is Cytoplasmic; sequence NSLRRHTWRMQHNGHSLQDPSTQAHTRAXK. Residues 235–255 form a helical membrane-spanning segment; it reads SLISFLILYVLSFLSLIIDAT. The Extracellular segment spans residues 256-264; that stretch reads KFISMQNDF. The chain crosses the membrane as a helical span at residues 265–285; it reads YWPWQTAVYLGVSVHPFILIF. The Cytoplasmic portion of the chain corresponds to 286 to 307; that stretch reads SNLKLRSVFWKLLLLARGFWVA.

The protein belongs to the G-protein coupled receptor T2R family.

The protein resides in the membrane. Functionally, receptor that may play a role in the perception of bitterness and is gustducin-linked. May play a role in sensing the chemical composition of the gastrointestinal content. The activity of this receptor may stimulate alpha gustducin, mediate PLC-beta-2 activation and lead to the gating of TRPM5. In Pongo pygmaeus (Bornean orangutan), this protein is Taste receptor type 2 member 41 (TAS2R41).